Reading from the N-terminus, the 481-residue chain is Metalloprotease TldD (481 aa).

This sequence belongs to the peptidase U62 family.

Metalloprotease involved in CcdA degradation. Suppresses the inhibitory activity of the carbon storage regulator (CsrA). The protein is Metalloprotease TldD (tldD) of Escherichia coli (strain K12).